Consider the following 307-residue polypeptide: Murein tetrapeptide carboxypeptidase (307 aa).

The active-site Nucleophile is serine 115. Catalysis depends on charge relay system residues glutamate 217 and histidine 285.

It belongs to the peptidase S66 family. As to quaternary structure, homodimer.

It localises to the cytoplasm. The enzyme catalyses N-acetyl-D-glucosaminyl-N-acetylmuramoyl-L-alanyl-meso-2,6-diaminoheptanedioyl-D-alanine + H2O = N-acetyl-D-glucosaminyl-N-acetylmuramoyl-L-alanyl-meso-2,6-diaminoheptanedioate + D-alanine. It participates in cell wall biogenesis; peptidoglycan recycling. Releases the terminal D-alanine residue from the cytoplasmic disaccharide-tetrapeptide GlcNAc-MurNAc-L-Ala-gamma-D-Glu-meso-Dap-D-Ala, which is a murein turnover product. Probably also act on free tetrapetide. May be involved in murein recycling. The polypeptide is Murein tetrapeptide carboxypeptidase (Pseudomonas aeruginosa (strain ATCC 15692 / DSM 22644 / CIP 104116 / JCM 14847 / LMG 12228 / 1C / PRS 101 / PAO1)).